A 456-amino-acid chain; its full sequence is tRNA modification GTPase MnmE (456 aa).

The (6S)-5-formyl-5,6,7,8-tetrahydrofolate site is built by Lys29, Glu87, and Arg126. The TrmE-type G domain maps to 222–380; sequence GYKLAIIGRP…LLSLLASWLD (159 aa). A K(+)-binding site is contributed by Asn232. GTP-binding positions include 232–237, 251–257, and 276–279; these read NVGKSS, SDIPGTT, and DTAG. Ser236 provides a ligand contact to Mg(2+). Residues Ser251, Ile253, and Thr256 each contribute to the K(+) site. Mg(2+) is bound at residue Thr257. Lys456 serves as a coordination point for (6S)-5-formyl-5,6,7,8-tetrahydrofolate.

Belongs to the TRAFAC class TrmE-Era-EngA-EngB-Septin-like GTPase superfamily. TrmE GTPase family. As to quaternary structure, homodimer. Heterotetramer of two MnmE and two MnmG subunits. The cofactor is K(+).

The protein localises to the cytoplasm. In terms of biological role, exhibits a very high intrinsic GTPase hydrolysis rate. Involved in the addition of a carboxymethylaminomethyl (cmnm) group at the wobble position (U34) of certain tRNAs, forming tRNA-cmnm(5)s(2)U34. The chain is tRNA modification GTPase MnmE from Wolinella succinogenes (strain ATCC 29543 / DSM 1740 / CCUG 13145 / JCM 31913 / LMG 7466 / NCTC 11488 / FDC 602W) (Vibrio succinogenes).